A 412-amino-acid chain; its full sequence is Diphosphomevalonate decarboxylase MVD1, peroxisomal (412 aa).

23 to 26 contributes to the (R)-5-diphosphomevalonate binding site; that stretch reads YWGK. The short motif at 40–48 is the Peroxisomal targeting signal PTS2 element; that stretch reads SVTLDPDHL. (R)-5-diphosphomevalonate-binding positions include Arg78, 161–166, and Thr217; that span reads SGSACR.

The protein belongs to the diphosphomevalonate decarboxylase family. Homodimer.

It localises to the peroxisome. It catalyses the reaction (R)-5-diphosphomevalonate + ATP = isopentenyl diphosphate + ADP + phosphate + CO2. The protein operates within isoprenoid biosynthesis; isopentenyl diphosphate biosynthesis via mevalonate pathway; isopentenyl diphosphate from (R)-mevalonate: step 3/3. Its function is as follows. Performs the first committed step in the biosynthesis of isoprene-containing compounds such as sterols and terpenoids. Is specific for (R)-5-diphosphomevalonate (MVAPP). The catalytic efficiency with (R)-5-phosphomevalonate (MVAP) as substrate is 10000-fold lower than for MVAPP. Can complement a yeast mutant defective in MVD activity. This Arabidopsis thaliana (Mouse-ear cress) protein is Diphosphomevalonate decarboxylase MVD1, peroxisomal.